A 393-amino-acid chain; its full sequence is NAD(P)H-quinone oxidoreductase subunit H, chloroplastic (393 aa).

Belongs to the complex I 49 kDa subunit family. In terms of assembly, NDH is composed of at least 16 different subunits, 5 of which are encoded in the nucleus.

The protein localises to the plastid. Its subcellular location is the chloroplast thylakoid membrane. It carries out the reaction a plastoquinone + NADH + (n+1) H(+)(in) = a plastoquinol + NAD(+) + n H(+)(out). It catalyses the reaction a plastoquinone + NADPH + (n+1) H(+)(in) = a plastoquinol + NADP(+) + n H(+)(out). Functionally, NDH shuttles electrons from NAD(P)H:plastoquinone, via FMN and iron-sulfur (Fe-S) centers, to quinones in the photosynthetic chain and possibly in a chloroplast respiratory chain. The immediate electron acceptor for the enzyme in this species is believed to be plastoquinone. Couples the redox reaction to proton translocation, and thus conserves the redox energy in a proton gradient. This Phaseolus vulgaris (Kidney bean) protein is NAD(P)H-quinone oxidoreductase subunit H, chloroplastic.